Here is a 422-residue protein sequence, read N- to C-terminus: MSDMFRKSVLNKLPHLPPTRAPWADESEPIEEIDEEDEQLDGIGEFKPATMGPSKHDTQDYSPLSASTFFAQAAEVQPPSTPCTFRVYLTPPNLSIASANAGTPPGPSGLRTQQQTNRHGTYLVCHHGGGASGLGFAPLAREVKAKGNGEMGVLAFDCRGHGKTSTSDPNLELDLSHDTLLSDFMAIIEMMFPDPKESPSLILLGHSMGAAPVVSAAPELQKKGYTIPGVVVLDVVEGTAVESLPLMKSVLSKRPESFRSVIDAIYWHVTSNSIRNVESARVSVPHIIVPAPSSSSSDPSANPGGKQVWRTNLVGTEPYWEGWYKGLSQRFLRTKCARLLVLAGQERLDRELMVGQMQGKFQLEVMSDVGHYLHEDNPAGLAATLITFWHRNTRVLVLPPKIGAPGPGARGGPVEVKQVGQQ.

The tract at residues 1 to 27 (MSDMFRKSVLNKLPHLPPTRAPWADES) is disordered. Catalysis depends on residues S207, D234, and H371.

The protein belongs to the AB hydrolase superfamily.

It carries out the reaction [phosphatase 2A protein]-C-terminal L-leucine methyl ester + H2O = [phosphatase 2A protein]-C-terminal L-leucine + methanol + H(+). Functionally, demethylates proteins that have been reversibly carboxymethylated. Demethylates the phosphatase PP2A catalytic subunit. This chain is Protein phosphatase methylesterase 1 (PPE1), found in Cryptococcus neoformans var. neoformans serotype D (strain JEC21 / ATCC MYA-565) (Filobasidiella neoformans).